Here is a 476-residue protein sequence, read N- to C-terminus: Chromosomal replication initiator protein DnaA (476 aa).

Positions 1–75 are domain I, interacts with DnaA modulators; sequence MLAPDTFWLA…TQMAENHFAR (75 aa). The tract at residues 75–139 is domain II; the sequence is RPVQLQLELA…AKEKQEKNPT (65 aa). The interval 110–141 is disordered; it reads FDAPTESAQKAPKDTKDTKDAKEKQEKNPTRL. A compositionally biased stretch (basic and acidic residues) spans 120-138; it reads APKDTKDTKDAKEKQEKNP. Residues 140–356 form a domain III, AAA+ region region; that stretch reads RLNPSFTFNT…GALKRVVAYS (217 aa). 4 residues coordinate ATP: G184, G186, K187, and T188. The domain IV, binds dsDNA stretch occupies residues 357 to 476; it reads RFTGHALTLD…FNTLLHILRG (120 aa).

The protein belongs to the DnaA family. In terms of assembly, oligomerizes as a right-handed, spiral filament on DNA at oriC.

Its subcellular location is the cytoplasm. Its function is as follows. Plays an essential role in the initiation and regulation of chromosomal replication. ATP-DnaA binds to the origin of replication (oriC) to initiate formation of the DNA replication initiation complex once per cell cycle. Binds the DnaA box (a 9 base pair repeat at the origin) and separates the double-stranded (ds)DNA. Forms a right-handed helical filament on oriC DNA; dsDNA binds to the exterior of the filament while single-stranded (ss)DNA is stabiized in the filament's interior. The ATP-DnaA-oriC complex binds and stabilizes one strand of the AT-rich DNA unwinding element (DUE), permitting loading of DNA polymerase. After initiation quickly degrades to an ADP-DnaA complex that is not apt for DNA replication. Binds acidic phospholipids. The protein is Chromosomal replication initiator protein DnaA of Nitrosospira multiformis (strain ATCC 25196 / NCIMB 11849 / C 71).